A 266-amino-acid polypeptide reads, in one-letter code: Thymidylate synthase (266 aa).

DUMP-binding positions include arginine 20 and 129–130; that span reads RR. Cysteine 149 functions as the Nucleophile in the catalytic mechanism. DUMP contacts are provided by residues 169 to 172, asparagine 180, and 210 to 212; these read RSCD and HVY. Residue aspartate 172 participates in (6R)-5,10-methylene-5,6,7,8-tetrahydrofolate binding. Position 265 (alanine 265) interacts with (6R)-5,10-methylene-5,6,7,8-tetrahydrofolate.

This sequence belongs to the thymidylate synthase family. Bacterial-type ThyA subfamily. Homodimer.

Its subcellular location is the cytoplasm. The enzyme catalyses dUMP + (6R)-5,10-methylene-5,6,7,8-tetrahydrofolate = 7,8-dihydrofolate + dTMP. It functions in the pathway pyrimidine metabolism; dTTP biosynthesis. In terms of biological role, catalyzes the reductive methylation of 2'-deoxyuridine-5'-monophosphate (dUMP) to 2'-deoxythymidine-5'-monophosphate (dTMP) while utilizing 5,10-methylenetetrahydrofolate (mTHF) as the methyl donor and reductant in the reaction, yielding dihydrofolate (DHF) as a by-product. This enzymatic reaction provides an intracellular de novo source of dTMP, an essential precursor for DNA biosynthesis. In Bifidobacterium longum (strain NCC 2705), this protein is Thymidylate synthase.